The following is a 201-amino-acid chain: MNGSPSAMKGTTTVGVVCRDGVVLAADRRATLGNMVTSKEVTKVFQIDDHLAIAGAGLVGDILSLVRLLRAEAKLYRAKVGREMSVKALATLVSNVLHGSRHLPYFAWFLIGGYDVKPRLYSIDAAGGVTEERFIAAGSGMEFALALLEENFSDGMGLDEGIDLAVRAVKAAIRRDVYTGEGVTVVAITKEGYRELEPVLK.

Residues 1–10 (MNGSPSAMKG) constitute a propeptide, removed in mature form; by autocatalysis. The Nucleophile role is filled by Thr11.

Belongs to the peptidase T1B family. The 20S proteasome core is composed of 14 alpha and 14 beta subunits that assemble into four stacked heptameric rings, resulting in a barrel-shaped structure. The two inner rings, each composed of seven catalytic beta subunits, are sandwiched by two outer rings, each composed of seven alpha subunits. The catalytic chamber with the active sites is on the inside of the barrel. Has a gated structure, the ends of the cylinder being occluded by the N-termini of the alpha-subunits. Is capped at one or both ends by the proteasome regulatory ATPase, PAN.

The protein resides in the cytoplasm. The catalysed reaction is Cleavage of peptide bonds with very broad specificity.. Its activity is regulated as follows. The formation of the proteasomal ATPase PAN-20S proteasome complex, via the docking of the C-termini of PAN into the intersubunit pockets in the alpha-rings, triggers opening of the gate for substrate entry. Interconversion between the open-gate and close-gate conformations leads to a dynamic regulation of the 20S proteasome proteolysis activity. Its function is as follows. Component of the proteasome core, a large protease complex with broad specificity involved in protein degradation. The polypeptide is Proteasome subunit beta 1 (Thermococcus gammatolerans (strain DSM 15229 / JCM 11827 / EJ3)).